The following is a 294-amino-acid chain: 4-hydroxy-tetrahydrodipicolinate synthase (294 aa).

Threonine 45 contacts pyruvate. Tyrosine 133 (proton donor/acceptor) is an active-site residue. Catalysis depends on lysine 161, which acts as the Schiff-base intermediate with substrate. Residue isoleucine 203 coordinates pyruvate.

This sequence belongs to the DapA family. As to quaternary structure, homotetramer; dimer of dimers.

The protein localises to the cytoplasm. The catalysed reaction is L-aspartate 4-semialdehyde + pyruvate = (2S,4S)-4-hydroxy-2,3,4,5-tetrahydrodipicolinate + H2O + H(+). It functions in the pathway amino-acid biosynthesis; L-lysine biosynthesis via DAP pathway; (S)-tetrahydrodipicolinate from L-aspartate: step 3/4. Its function is as follows. Catalyzes the condensation of (S)-aspartate-beta-semialdehyde [(S)-ASA] and pyruvate to 4-hydroxy-tetrahydrodipicolinate (HTPA). The protein is 4-hydroxy-tetrahydrodipicolinate synthase of Shewanella sp. (strain MR-7).